A 206-amino-acid chain; its full sequence is Superoxide dismutase [Mn] (206 aa).

H30, H78, D166, and H170 together coordinate Mn(2+).

Belongs to the iron/manganese superoxide dismutase family. Homodimer. It depends on Mn(2+) as a cofactor.

The enzyme catalyses 2 superoxide + 2 H(+) = H2O2 + O2. In terms of biological role, destroys superoxide anion radicals which are normally produced within the cells and which are toxic to biological systems. The polypeptide is Superoxide dismutase [Mn] (sodA) (Chlamydia trachomatis serovar D (strain ATCC VR-885 / DSM 19411 / UW-3/Cx)).